The following is a 479-amino-acid chain: tRNA modification GTPase MnmE (479 aa).

Residues Arg-30, Glu-91, and Lys-130 each coordinate (6S)-5-formyl-5,6,7,8-tetrahydrofolate. A TrmE-type G domain is found at 226-402; that stretch reads GFRIVLTGLP…VLKDLVKEFA (177 aa). Residue Asn-236 participates in K(+) binding. Residues 236–241, 255–261, and 280–283 contribute to the GTP site; these read NVGKSS, TDIPGTT, and DTAG. Ser-240 lines the Mg(2+) pocket. Residues Thr-255, Ile-257, and Thr-260 each contribute to the K(+) site. Thr-261 is a Mg(2+) binding site. Lys-479 is a binding site for (6S)-5-formyl-5,6,7,8-tetrahydrofolate.

It belongs to the TRAFAC class TrmE-Era-EngA-EngB-Septin-like GTPase superfamily. TrmE GTPase family. Homodimer. Heterotetramer of two MnmE and two MnmG subunits. Requires K(+) as cofactor.

It localises to the cytoplasm. Exhibits a very high intrinsic GTPase hydrolysis rate. Involved in the addition of a carboxymethylaminomethyl (cmnm) group at the wobble position (U34) of certain tRNAs, forming tRNA-cmnm(5)s(2)U34. The sequence is that of tRNA modification GTPase MnmE from Bdellovibrio bacteriovorus (strain ATCC 15356 / DSM 50701 / NCIMB 9529 / HD100).